The following is an 862-amino-acid chain: Squamosa promoter-binding-like protein 1 (862 aa).

The interval 55-98 (KRRRVSPEDDDGEECINAATTNGDDGQISGQRGRSSEDEMPRQG) is disordered. A compositionally biased stretch (polar residues) spans 72–87 (AATTNGDDGQISGQRG). The segment at 104–181 (GPCCQVDGCT…AQHNRRRRKV (78 aa)) adopts an SBP-type zinc-finger fold. The Zn(2+) site is built by C107, C112, C129, H132, C148, C151, H155, and C167. The short motif at 164 to 180 (KKSCRSRLAQHNRRRRK) is the Bipartite nuclear localization signal element.

As to expression, ubiquitous.

The protein resides in the nucleus. Functionally, trans-acting factor that binds specifically to the consensus nucleotide sequence 5'-TNCGTACAA-3'. The protein is Squamosa promoter-binding-like protein 1 (SPL1) of Oryza sativa subsp. japonica (Rice).